Here is a 293-residue protein sequence, read N- to C-terminus: Ribosomal RNA small subunit methyltransferase H (293 aa).

S-adenosyl-L-methionine contacts are provided by residues 34-36 (GGH), Asp54, Leu86, Asp101, and Gln108.

It belongs to the methyltransferase superfamily. RsmH family.

Its subcellular location is the cytoplasm. It carries out the reaction cytidine(1402) in 16S rRNA + S-adenosyl-L-methionine = N(4)-methylcytidine(1402) in 16S rRNA + S-adenosyl-L-homocysteine + H(+). In terms of biological role, specifically methylates the N4 position of cytidine in position 1402 (C1402) of 16S rRNA. The protein is Ribosomal RNA small subunit methyltransferase H of Elusimicrobium minutum (strain Pei191).